A 516-amino-acid polypeptide reads, in one-letter code: Alstonine synthase (516 aa).

A helical transmembrane segment spans residues 6 to 26; that stretch reads NFSLTSPIFLLLSSLFLIILL. Heme is bound at residue Cys-453.

This sequence belongs to the cytochrome P450 family. It depends on heme as a cofactor. As to expression, highly expressed in stems. Expressed at low levels in roots.

Its subcellular location is the endoplasmic reticulum membrane. It carries out the reaction tetrahydroalstonine + A + reduced [NADPH--hemoprotein reductase] + O2 = alstonine + AH2 + oxidized [NADPH--hemoprotein reductase] + 2 H2O + H(+). The catalysed reaction is ajmalicine + A + reduced [NADPH--hemoprotein reductase] + O2 = serpentine + AH2 + oxidized [NADPH--hemoprotein reductase] + 2 H2O + H(+). Its pathway is alkaloid biosynthesis. In terms of biological role, involved in monoterpene indole alkaloids (MIAs) biosynthesis. Converts by aromatization the tetrahydro-beta-carboline alkaloids tetrahydroalstonine and ajmalicine to the corresponding beta-carboline alkaloids alstonine and serpentine, respectively. This is Alstonine synthase from Catharanthus roseus (Madagascar periwinkle).